We begin with the raw amino-acid sequence, 822 residues long: Valine--tRNA ligase (822 aa).

The 'HIGH' region signature appears at 41–51 (PNVTGQLHLGH). The 'KMSKS' region motif lies at 511–515 (KMSKS). K514 contributes to the ATP binding site. Residues 765–822 (EQKGRELKEIQFLKSEILRAEKILTNKGFLEKAPREKIDLERTKLEKLKEKLAFYEKK) adopt a coiled-coil conformation.

This sequence belongs to the class-I aminoacyl-tRNA synthetase family. ValS type 1 subfamily. As to quaternary structure, monomer.

It localises to the cytoplasm. The enzyme catalyses tRNA(Val) + L-valine + ATP = L-valyl-tRNA(Val) + AMP + diphosphate. Its function is as follows. Catalyzes the attachment of valine to tRNA(Val). As ValRS can inadvertently accommodate and process structurally similar amino acids such as threonine, to avoid such errors, it has a 'posttransfer' editing activity that hydrolyzes mischarged Thr-tRNA(Val) in a tRNA-dependent manner. The protein is Valine--tRNA ligase of Mesomycoplasma hyopneumoniae (strain 7448) (Mycoplasma hyopneumoniae).